The chain runs to 172 residues: MKNIVLTGFMGSGKTTIGRLVAEKLNIDLVDTDSEIIKEFKLTIDQIFEIHGEKKFRECEKRVIERVSKLENVVISTGGGVVLDPENVNLLRKNGVIYFLYASPENILKRLKDDNTRPLLKNGDKLSNIIRLMNIRMPFYKNCDFEINTDILSPELAAEKIISIHMAKESKR.

11 to 16 lines the ATP pocket; sequence GSGKTT. Threonine 15 lines the Mg(2+) pocket. Substrate contacts are provided by aspartate 33, arginine 57, and glycine 79. Position 117 (arginine 117) interacts with ATP. Residue arginine 136 participates in substrate binding.

The protein belongs to the shikimate kinase family. In terms of assembly, monomer. The cofactor is Mg(2+).

The protein resides in the cytoplasm. It catalyses the reaction shikimate + ATP = 3-phosphoshikimate + ADP + H(+). The protein operates within metabolic intermediate biosynthesis; chorismate biosynthesis; chorismate from D-erythrose 4-phosphate and phosphoenolpyruvate: step 5/7. In terms of biological role, catalyzes the specific phosphorylation of the 3-hydroxyl group of shikimic acid using ATP as a cosubstrate. The sequence is that of Shikimate kinase from Caldicellulosiruptor saccharolyticus (strain ATCC 43494 / DSM 8903 / Tp8T 6331).